We begin with the raw amino-acid sequence, 66 residues long: Cold shock-like protein CspLB (66 aa).

Residues Gly-4 to Val-63 form the CSD domain.

As to quaternary structure, homodimer.

It is found in the cytoplasm. This chain is Cold shock-like protein CspLB (cspLB), found in Listeria monocytogenes serovar 1/2a (strain ATCC BAA-679 / EGD-e).